Reading from the N-terminus, the 507-residue chain is RNA-splicing ligase RtcB homolog (507 aa).

Residues Asp121, Cys124, His229, His261, and His355 each contribute to the Mn(2+) site. 228-232 (NHYAE) contacts GMP. Residues 355–356 (HN), 404–407 (GGTM), Ser411, 430–433 (HGAG), and Lys506 each bind GMP. His430 (GMP-histidine intermediate) is an active-site residue.

The protein belongs to the RtcB family. In terms of assembly, catalytic component of the tRNA-splicing ligase complex. Mn(2+) serves as cofactor.

The catalysed reaction is a 3'-end 3'-phospho-ribonucleotide-RNA + a 5'-end dephospho-ribonucleoside-RNA + GTP = a ribonucleotidyl-ribonucleotide-RNA + GMP + diphosphate. It carries out the reaction a 3'-end 2',3'-cyclophospho-ribonucleotide-RNA + a 5'-end dephospho-ribonucleoside-RNA + GTP + H2O = a ribonucleotidyl-ribonucleotide-RNA + GMP + diphosphate + H(+). Its function is as follows. Catalytic subunit of the tRNA-splicing ligase complex that acts by directly joining spliced tRNA halves to mature-sized tRNAs by incorporating the precursor-derived splice junction phosphate into the mature tRNA as a canonical 3',5'-phosphodiester. May act as an RNA ligase with broad substrate specificity, and may function toward other RNAs. This chain is RNA-splicing ligase RtcB homolog, found in Plasmodium yoelii yoelii.